A 510-amino-acid chain; its full sequence is D-alanine--D-alanyl carrier protein ligase (510 aa).

157–158 (TS) serves as a coordination point for ATP. Asp202 lines the D-alanine pocket. 297 to 302 (NTYGPT) contacts ATP. D-alanine is bound at residue Val306. ATP is bound by residues Asp389 and Lys498. Lys498 lines the D-alanine pocket.

It belongs to the ATP-dependent AMP-binding enzyme family. DltA subfamily.

The protein localises to the cytoplasm. It carries out the reaction holo-[D-alanyl-carrier protein] + D-alanine + ATP = D-alanyl-[D-alanyl-carrier protein] + AMP + diphosphate. It functions in the pathway cell wall biogenesis; lipoteichoic acid biosynthesis. In terms of biological role, catalyzes the first step in the D-alanylation of lipoteichoic acid (LTA), the activation of D-alanine and its transfer onto the D-alanyl carrier protein (Dcp) DltC. In an ATP-dependent two-step reaction, forms a high energy D-alanyl-AMP intermediate, followed by transfer of the D-alanyl residue as a thiol ester to the phosphopantheinyl prosthetic group of the Dcp. D-alanylation of LTA plays an important role in modulating the properties of the cell wall in Gram-positive bacteria, influencing the net charge of the cell wall. The polypeptide is D-alanine--D-alanyl carrier protein ligase (Listeria monocytogenes serotype 4a (strain HCC23)).